The sequence spans 662 residues: Protein Aster-C (662 aa).

A disordered region spans residues 1–34; sequence MEGAPTVRQVMNEGDSSLATELQEDVEENPSPTV. The GRAM domain occupies 69–136; sequence EEYRRQFTHL…KNITFMTKEK (68 aa). 2 disordered regions span residues 212 to 237 and 250 to 284; these read SIED…EKLS and VSET…LPTL. Residues 265 to 276 show a composition bias toward basic and acidic residues; the sequence is LGKEESQNEKQT. In terms of domain architecture, VASt spans 326-497; the sequence is HGRLFINRIF…DLLIEESILN (172 aa). Residues 557-577 form a helical membrane-spanning segment; the sequence is LIVVMSIFVLLLVLLNVTLFL.

It is found in the endoplasmic reticulum membrane. It localises to the cell membrane. Its function is as follows. Cholesterol transporter that mediates non-vesicular transport of cholesterol from the plasma membrane (PM) to the endoplasmic reticulum (ER). Contains unique domains for binding cholesterol and the PM, thereby serving as a molecular bridge for the transfer of cholesterol from the PM to the ER. Plays a crucial role in cholesterol homeostasis and has the unique ability to localize to the PM based on the level of membrane cholesterol. In lipid-poor conditions localizes to the ER membrane and in response to excess cholesterol in the PM is recruited to the endoplasmic reticulum-plasma membrane contact sites (EPCS) which is mediated by the GRAM domain. At the EPCS, the sterol-binding VASt/ASTER domain binds to the cholesterol in the PM and facilitates its transfer from the PM to ER. This Pongo abelii (Sumatran orangutan) protein is Protein Aster-C (GRAMD1C).